Reading from the N-terminus, the 245-residue chain is 1-(5-phosphoribosyl)-5-[(5-phosphoribosylamino)methylideneamino] imidazole-4-carboxamide isomerase (245 aa).

The Proton acceptor role is filled by D8. Residue D129 is the Proton donor of the active site.

The protein belongs to the HisA/HisF family.

The protein resides in the cytoplasm. It carries out the reaction 1-(5-phospho-beta-D-ribosyl)-5-[(5-phospho-beta-D-ribosylamino)methylideneamino]imidazole-4-carboxamide = 5-[(5-phospho-1-deoxy-D-ribulos-1-ylimino)methylamino]-1-(5-phospho-beta-D-ribosyl)imidazole-4-carboxamide. Its pathway is amino-acid biosynthesis; L-histidine biosynthesis; L-histidine from 5-phospho-alpha-D-ribose 1-diphosphate: step 4/9. This Rhodopseudomonas palustris (strain BisB5) protein is 1-(5-phosphoribosyl)-5-[(5-phosphoribosylamino)methylideneamino] imidazole-4-carboxamide isomerase.